Reading from the N-terminus, the 492-residue chain is Beta-glucosidase 38 (492 aa).

A signal peptide spans 1–21 (MNMPLLLLIAIVVVSLSHGNG). A beta-D-glucoside is bound at residue Gln-45. N-linked (GlcNAc...) asparagine glycans are attached at residues Asn-73 and Asn-77. A beta-D-glucoside-binding positions include His-146 and 191-192 (NE). Glu-192 acts as the Proton donor in catalysis. Cysteines 211 and 214 form a disulfide. N-linked (GlcNAc...) asparagine glycosylation is present at Asn-310. An a beta-D-glucoside-binding site is contributed by Tyr-331. Asn-341 is a glycosylation site (N-linked (GlcNAc...) asparagine). Glu-400 is an a beta-D-glucoside binding site. The active-site Nucleophile is Glu-400. Residue Asn-408 is glycosylated (N-linked (GlcNAc...) asparagine). A beta-D-glucoside contacts are provided by residues Trp-447, 454 to 455 (EW), and Phe-463.

This sequence belongs to the glycosyl hydrolase 1 family.

It catalyses the reaction Hydrolysis of terminal, non-reducing beta-D-glucosyl residues with release of beta-D-glucose.. In Oryza sativa subsp. japonica (Rice), this protein is Beta-glucosidase 38 (BGLU38).